Consider the following 244-residue polypeptide: Zinc import ATP-binding protein ZnuC 2 (244 aa).

The ABC transporter domain occupies 3–218 (IGCASLTIQL…PEYLALFGID (216 aa)). 35-42 (GPNGSGKT) contributes to the ATP binding site.

It belongs to the ABC transporter superfamily. Zinc importer (TC 3.A.1.15.5) family. In terms of assembly, the complex is composed of two ATP-binding proteins (ZnuC), two transmembrane proteins (ZnuB) and a solute-binding protein (ZnuA).

The protein resides in the cell inner membrane. The enzyme catalyses Zn(2+)(out) + ATP(in) + H2O(in) = Zn(2+)(in) + ADP(in) + phosphate(in) + H(+)(in). In terms of biological role, part of the ABC transporter complex ZnuABC involved in zinc import. Responsible for energy coupling to the transport system. In Hahella chejuensis (strain KCTC 2396), this protein is Zinc import ATP-binding protein ZnuC 2.